The chain runs to 362 residues: Photosystem II protein D1 3 (362 aa).

3 helical membrane-spanning segments follow: residues 29 to 46, 118 to 133, and 142 to 156; these read YVGW…SATI, HFLI…EWEL, and WICI…AATA. A chlorophyll a-binding site is contributed by His118. Tyr126 lines the pheophytin a pocket. [CaMn4O5] cluster contacts are provided by Asp170 and Glu189. A helical transmembrane segment spans residues 197–218; that stretch reads FHMLGVAGVFGGALISAMHGSL. His198 lines the chlorophyll a pocket. A quinone contacts are provided by residues His215 and 264 to 265; that span reads AF. Residue His215 participates in Fe cation binding. Position 274 (His274) interacts with Fe cation. The helical transmembrane segment at 276–290 threads the bilayer; sequence IMAAFPVIGIWFTSL. The [CaMn4O5] cluster site is built by His334, Glu335, Asp344, and Ala346. Positions 347-362 are excised as a propeptide; the sequence is GTESAPVAVSTAKVGG.

It belongs to the reaction center PufL/M/PsbA/D family. PSII is composed of 1 copy each of membrane proteins PsbA, PsbB, PsbC, PsbD, PsbE, PsbF, PsbH, PsbI, PsbJ, PsbK, PsbL, PsbM, PsbT, PsbX, Psb30/Ycf12, peripheral proteins PsbO, CyanoQ (PsbQ), PsbU, PsbV and a large number of cofactors. It forms dimeric complexes. Requires The D1/D2 heterodimer binds P680, chlorophylls that are the primary electron donor of PSII, and subsequent electron acceptors. It shares a non-heme iron and each subunit binds pheophytin, quinone, additional chlorophylls, carotenoids and lipids. D1 provides most of the ligands for the Mn4-Ca-O5 cluster of the oxygen-evolving complex (OEC). There is also a Cl(-1) ion associated with D1 and D2, which is required for oxygen evolution. The PSII complex binds additional chlorophylls, carotenoids and specific lipids. as cofactor. In terms of processing, tyr-161 forms a radical intermediate that is referred to as redox-active TyrZ, YZ or Y-Z. C-terminally processed by CtpA; processing is essential to allow assembly of the oxygen-evolving complex and thus photosynthetic growth.

Its subcellular location is the cell inner membrane. The enzyme catalyses 2 a plastoquinone + 4 hnu + 2 H2O = 2 a plastoquinol + O2. Functionally, photosystem II (PSII) is a light-driven water:plastoquinone oxidoreductase that uses light energy to abstract electrons from H(2)O, generating O(2) and a proton gradient subsequently used for ATP formation. It consists of a core antenna complex that captures photons, and an electron transfer chain that converts photonic excitation into a charge separation. The D1/D2 (PsbA/PsbD) reaction center heterodimer binds P680, the primary electron donor of PSII as well as several subsequent electron acceptors. This chain is Photosystem II protein D1 3, found in Gloeobacter violaceus (strain ATCC 29082 / PCC 7421).